The chain runs to 266 residues: Large ribosomal subunit protein eL8 (266 aa).

Residues K11, K20, and K21 each participate in a glycyl lysine isopeptide (Lys-Gly) (interchain with G-Cter in SUMO2) cross-link. At K34 the chain carries N6-acetyllysine. K48 participates in a covalent cross-link: Glycyl lysine isopeptide (Lys-Gly) (interchain with G-Cter in SUMO2). K97 is modified (N6-acetyllysine; alternate). K97 is covalently cross-linked (Glycyl lysine isopeptide (Lys-Gly) (interchain with G-Cter in SUMO2); alternate). K125 participates in a covalent cross-link: Glycyl lysine isopeptide (Lys-Gly) (interchain with G-Cter in SUMO2). Residue K217 is modified to N6-acetyllysine. A Glycyl lysine isopeptide (Lys-Gly) (interchain with G-Cter in SUMO2) cross-link involves residue K245.

It belongs to the eukaryotic ribosomal protein eL8 family. Component of the large ribosomal subunit. Interacts with CRY1. Interacts with DICER1, AGO2, TARBP2, MOV10 and EIF6; they form a large RNA-induced silencing complex (RISC).

Its subcellular location is the cytoplasm. Functionally, component of the large ribosomal subunit. The ribosome is a large ribonucleoprotein complex responsible for the synthesis of proteins in the cell. This is Large ribosomal subunit protein eL8 (Rpl7a) from Mus musculus (Mouse).